A 351-amino-acid chain; its full sequence is MSMCTIVSISQSALKHNLLVVKENSPNSKIVSMVKANAYGHKINLINPIINHSDLLAVSEISEAKKLRKITKKPILLLSGVIEDQELQQAIKLNCQIVVHDKTQITTINNTKQPINIWIKINTGMHRLGLSTHEYFDCIKLLANNPLINTQCVMSHFACADEINHPMNQSQLFEFKKSTYHTTKRSMANSAAILSNPASHFDYVRPGIMLYGVSPFEIINNHLKPVMQISAPIMSIKTIQTGDSVGYGATWIAKKSTTIATIGIGYGDGYPRHAKNGTPVLINNNLCPLIGRVSMDLICVDISNVKASVGDNVILWGAQKLRIETIAKYSDTIAYELLTGISSRVAFVSTI.

The active-site Proton acceptor; specific for D-alanine is Lys35. Residue Lys35 is modified to N6-(pyridoxal phosphate)lysine. Arg127 is a substrate binding site. Residue Tyr247 is the Proton acceptor; specific for L-alanine of the active site. Met295 lines the substrate pocket.

The protein belongs to the alanine racemase family. Pyridoxal 5'-phosphate is required as a cofactor.

The catalysed reaction is L-alanine = D-alanine. The protein operates within amino-acid biosynthesis; D-alanine biosynthesis; D-alanine from L-alanine: step 1/1. Functionally, catalyzes the interconversion of L-alanine and D-alanine. May also act on other amino acids. The protein is Alanine racemase (alr) of Vesicomyosocius okutanii subsp. Calyptogena okutanii (strain HA).